We begin with the raw amino-acid sequence, 423 residues long: Tyrosine--tRNA ligase (423 aa).

Tyr-35 is a binding site for L-tyrosine. The short motif at 40–49 is the 'HIGH' region element; that stretch reads PTAPSLHAGH. 2 residues coordinate L-tyrosine: Tyr-170 and Gln-174. The 'KMSKS' region motif lies at 230–234; it reads KFGKS. Lys-233 is an ATP binding site. The 58-residue stretch at 355–412 folds into the S4 RNA-binding domain; sequence DLITDLLVATGLSASKGAARRTIAEGGVSVNNVKIDSDEWTPQASDFLHGRWLVLRRG.

It belongs to the class-I aminoacyl-tRNA synthetase family. TyrS type 1 subfamily. In terms of assembly, homodimer.

Its subcellular location is the cytoplasm. The enzyme catalyses tRNA(Tyr) + L-tyrosine + ATP = L-tyrosyl-tRNA(Tyr) + AMP + diphosphate + H(+). Its function is as follows. Catalyzes the attachment of tyrosine to tRNA(Tyr) in a two-step reaction: tyrosine is first activated by ATP to form Tyr-AMP and then transferred to the acceptor end of tRNA(Tyr). This is Tyrosine--tRNA ligase from Mycobacterium sp. (strain JLS).